The chain runs to 61 residues: Large ribosomal subunit protein bL32 (61 aa).

Belongs to the bacterial ribosomal protein bL32 family.

This is Large ribosomal subunit protein bL32 from Ehrlichia chaffeensis (strain ATCC CRL-10679 / Arkansas).